The following is a 39-amino-acid chain: Photosystem II reaction center protein J (39 aa).

A helical membrane pass occupies residues 7–27 (IPLWLVATIGGIAVLTVLGLF).

The protein belongs to the PsbJ family. As to quaternary structure, PSII is composed of 1 copy each of membrane proteins PsbA, PsbB, PsbC, PsbD, PsbE, PsbF, PsbH, PsbI, PsbJ, PsbK, PsbL, PsbM, PsbT, PsbX, PsbY, PsbZ, Psb30/Ycf12, at least 3 peripheral proteins of the oxygen-evolving complex and a large number of cofactors. It forms dimeric complexes.

It is found in the plastid. Its subcellular location is the chloroplast thylakoid membrane. One of the components of the core complex of photosystem II (PSII). PSII is a light-driven water:plastoquinone oxidoreductase that uses light energy to abstract electrons from H(2)O, generating O(2) and a proton gradient subsequently used for ATP formation. It consists of a core antenna complex that captures photons, and an electron transfer chain that converts photonic excitation into a charge separation. The sequence is that of Photosystem II reaction center protein J from Cyanidioschyzon merolae (strain NIES-3377 / 10D) (Unicellular red alga).